A 222-amino-acid chain; its full sequence is Ribonuclease HII (222 aa).

Positions 32 to 222 (FHIAGVDEVG…LIKRYKEDIS (191 aa)) constitute an RNase H type-2 domain. A divalent metal cation-binding residues include aspartate 38, glutamate 39, and aspartate 130.

This sequence belongs to the RNase HII family. It depends on Mn(2+) as a cofactor. The cofactor is Mg(2+).

The protein localises to the cytoplasm. It catalyses the reaction Endonucleolytic cleavage to 5'-phosphomonoester.. Functionally, endonuclease that specifically degrades the RNA of RNA-DNA hybrids. This Bartonella bacilliformis (strain ATCC 35685 / KC583 / Herrer 020/F12,63) protein is Ribonuclease HII.